A 249-amino-acid chain; its full sequence is Ribonuclease PH (249 aa).

Phosphate is bound by residues Arg86 and 124-126; that span reads GTR.

Belongs to the RNase PH family. In terms of assembly, homohexameric ring arranged as a trimer of dimers.

The catalysed reaction is tRNA(n+1) + phosphate = tRNA(n) + a ribonucleoside 5'-diphosphate. Functionally, phosphorolytic 3'-5' exoribonuclease that plays an important role in tRNA 3'-end maturation. Removes nucleotide residues following the 3'-CCA terminus of tRNAs; can also add nucleotides to the ends of RNA molecules by using nucleoside diphosphates as substrates, but this may not be physiologically important. Probably plays a role in initiation of 16S rRNA degradation (leading to ribosome degradation) during starvation. This is Ribonuclease PH from Clostridium botulinum (strain Eklund 17B / Type B).